A 145-amino-acid chain; its full sequence is Phospholipase A2, membrane associated (145 aa).

A signal peptide spans 1–20 (MKLLLLLLVVMASDLPQAHG). 7 disulfides stabilise this stretch: Cys46/Cys138, Cys48/Cys64, Cys63/Cys118, Cys69/Cys145, Cys70/Cys111, Cys79/Cys104, and Cys97/Cys109. Ca(2+) contacts are provided by His47, Gly49, and Gly51. Residue His67 is part of the active site. Position 68 (Asp68) interacts with Ca(2+). The active site involves Asp112.

This sequence belongs to the phospholipase A2 family. Requires Ca(2+) as cofactor. In terms of tissue distribution, alveolar macrophages, and at much lower levels in peripheral blood monocytes and peritoneal macrophages.

The protein resides in the secreted. The protein localises to the cell membrane. It localises to the mitochondrion outer membrane. The catalysed reaction is a 1,2-diacyl-sn-glycero-3-phosphoethanolamine + H2O = a 1-acyl-sn-glycero-3-phosphoethanolamine + a fatty acid + H(+). The enzyme catalyses 1-hexadecanoyl-2-(9Z-octadecenoyl)-sn-glycero-3-phosphoethanolamine + H2O = 1-hexadecanoyl-sn-glycero-3-phosphoethanolamine + (9Z)-octadecenoate + H(+). It carries out the reaction 1-hexadecanoyl-2-(9Z,12Z-octadecadienoyl)-sn-glycero-3-phosphoethanolamine + H2O = 1-hexadecanoyl-sn-glycero-3-phosphoethanolamine + (9Z,12Z)-octadecadienoate + H(+). It catalyses the reaction 1-hexadecanoyl-2-(5Z,8Z,11Z,14Z-eicosatetraenoyl)-sn-glycero-3-phosphoethanolamine + H2O = 1-hexadecanoyl-sn-glycero-3-phosphoethanolamine + (5Z,8Z,11Z,14Z)-eicosatetraenoate + H(+). The catalysed reaction is N-hexadecanoyl-1,2-di-(9Z-octadecenoyl)-sn-glycero-3-phosphoethanolamine + H2O = N-hexadecanoyl-1-(9Z-octadecenoyl)-sn-glycero-3-phosphoethanolamine + (9Z)-octadecenoate + H(+). The enzyme catalyses 1,2-dihexadecanoyl-sn-glycero-3-phospho-(1'-sn-glycerol) + H2O = 1-hexadecanoyl-sn-glycero-3-phospho-(1'-sn-glycerol) + hexadecanoate + H(+). It carries out the reaction 1-hexadecanoyl-2-(9Z-octadecenoyl)-sn-glycero-3-phosphoglycerol + H2O = 1-hexadecanoyl-sn-glycero-3-phosphoglycerol + (9Z)-octadecenoate + H(+). It catalyses the reaction 1-hexadecanoyl-2-(9Z-octadecenoyl)-sn-glycero-3-phospho-(1'-sn-glycerol) + H2O = 1-hexadecanoyl-sn-glycero-3-phospho-(1'-sn-glycerol) + (9Z)-octadecenoate + H(+). The catalysed reaction is a 1,2-diacyl-sn-glycero-3-phosphocholine + H2O = a 1-acyl-sn-glycero-3-phosphocholine + a fatty acid + H(+). The enzyme catalyses 1,2-dihexadecanoyl-sn-glycero-3-phosphocholine + H2O = 1-hexadecanoyl-sn-glycero-3-phosphocholine + hexadecanoate + H(+). It carries out the reaction 1-hexadecanoyl-2-(9Z-octadecenoyl)-sn-glycero-3-phosphocholine + H2O = 1-hexadecanoyl-sn-glycero-3-phosphocholine + (9Z)-octadecenoate + H(+). It catalyses the reaction 1-hexadecanoyl-2-(9Z,12Z-octadecadienoyl)-sn-glycero-3-phosphocholine + H2O = (9Z,12Z)-octadecadienoate + 1-hexadecanoyl-sn-glycero-3-phosphocholine + H(+). The catalysed reaction is 1-hexadecanoyl-2-(4Z,7Z,10Z,13Z,16Z,19Z-docosahexaenoyl)-sn-glycero-3-phosphocholine + H2O = (4Z,7Z,10Z,13Z,16Z,19Z)-docosahexaenoate + 1-hexadecanoyl-sn-glycero-3-phosphocholine + H(+). Secretory calcium-dependent phospholipase A2 that primarily targets extracellular phospholipids with implications in host antimicrobial defense, inflammatory response and tissue regeneration. Hydrolyzes the ester bond of the fatty acyl group attached at sn-2 position of phospholipids (phospholipase A2 activity) with preference for phosphatidylethanolamines and phosphatidylglycerols over phosphatidylcholines. Contributes to lipid remodeling of cellular membranes and generation of lipid mediators involved in pathogen clearance. Displays bactericidal activity against Gram-positive bacteria by directly hydrolyzing phospholipids of the bacterial membrane. Upon sterile inflammation, targets membrane phospholipids of extracellular mitochondria released from activated platelets, generating free unsaturated fatty acids such as arachidonate that is used by neighboring leukocytes to synthesize inflammatory eicosanoids such as leukotrienes. Simultaneously, by compromising mitochondrial membrane integrity, promotes the release in circulation of potent damage-associated molecular pattern molecules that activate the innate immune response. Plays a stem cell regulator role in the intestinal crypt. Within intracellular compartment mediates Paneth cell differentiation and its stem cell supporting functions by inhibiting Wnt signaling pathway in intestinal stem cell (ICS). Secreted in the intestinal lumen upon inflammation, acts in an autocrine way and promotes prostaglandin E2 synthesis that stimulates Wnt signaling pathway in ICS cells and tissue regeneration. May play a role in the biosynthesis of N-acyl ethanolamines that regulate energy metabolism and inflammation. Hydrolyzes N-acyl phosphatidylethanolamines to N-acyl lysophosphatidylethanolamines, which are further cleaved by a lysophospholipase D to release N-acyl ethanolamines. Independent of its catalytic activity, acts as a ligand for integrins. Binds to and activates integrins ITGAV:ITGB3, ITGA4:ITGB1 and ITGA5:ITGB1. Binds to a site (site 2) which is distinct from the classical ligand-binding site (site 1) and induces integrin conformational changes and enhanced ligand binding to site 1. Induces cell proliferation in an integrin-dependent manner. This is Phospholipase A2, membrane associated (PLA2G2A) from Cavia porcellus (Guinea pig).